The sequence spans 235 residues: Small ribosomal subunit protein mS23 (235 aa).

The segment at 51–71 (PYPIQHTEPKDRGRAAQRPRN) is disordered.

This sequence belongs to the mitochondrion-specific ribosomal protein mS23 family. In terms of assembly, component of the mitochondrial small ribosomal subunit.

The protein localises to the mitochondrion. The protein is Small ribosomal subunit protein mS23 (RSM25) of Chaetomium globosum (strain ATCC 6205 / CBS 148.51 / DSM 1962 / NBRC 6347 / NRRL 1970) (Soil fungus).